Here is a 979-residue protein sequence, read N- to C-terminus: Pimaradiene synthase pbcA (979 aa).

The short motif at 34–39 (VYDTAW) is the VYDTAW motif element. The short motif at 328–331 (DADD) is the DXDD B-type cyclization motif element. Positions 665, 669, 865, 866, 869, and 873 each coordinate Mg(2+). A DEXXE A-type cyclization motif motif is present at residues 665–669 (DEFME).

This sequence belongs to the terpene synthase family. Mg(2+) serves as cofactor.

It catalyses the reaction (2E,6E,10E)-geranylgeranyl diphosphate = ent-copalyl diphosphate. The catalysed reaction is ent-copalyl diphosphate = ent-pimara-8(14),15-diene + diphosphate. It functions in the pathway secondary metabolite biosynthesis; terpenoid biosynthesis. Its function is as follows. Bifunctional terpene synthase; part of the gene cluster that mediates the biosynthesis of the diterpene ent-pimara-8(14),15-diene (PD). Within the cluster, the HMG-CoA reductase AN1593 functions in the mevalonate pathway, which produces isoprenoid precursors. The geranylgeranyl pyrophosphate (GGPP) synthase AN1592 is needed in the formation of GGPP, the precursor for diterpenes. Lastly, the pimaradiene synthase pbcA performs the 2 cyclization steps that convert GGPP to ent-pimara-8(14),15-diene with ent-copalyl diphosphate as an intermediate. The putative roles of the remaining cluster enzymes in ent-pimara-8(14),15-diene biosynthesis is unclear. The cytochrome P450 monooxygenase AN1598, the glutathione S-transferase AN1595, the oxidoreductases AN1596 and AN1597 probably function as decorative enzymes. It is possible that in biological conditions the compound is oxidized to ent-pimara-8(14),15-dien-19-oic acid, which is a bioactive diterpene compound predominant in many plant extracts. The sequence is that of Pimaradiene synthase pbcA from Emericella nidulans (strain FGSC A4 / ATCC 38163 / CBS 112.46 / NRRL 194 / M139) (Aspergillus nidulans).